The sequence spans 303 residues: MNKTSDLRIIVLGAAAGGGLPQWNCGCRNCAMARDPASGLRPQTQSSLAVSLDGESWTVFNASPDIRQQVQDNCPLQPRRLRHSPIESVVLTNGDIDHLAGLLVLREKQAFTLFSTGAVGRIVSDNPVFQVLDPELVSRKTIEIDEAFSPLSGLDARLFAVPGKVPLFLEDGEPDLGIEGEHTVGLELEATGRRVYYVPGCAMMTDSLAARLRDADAVFFDGTLFSDDEMILTGTGRKTGRRMGHMPIDGEGGSLDALDLLNIRRKIYVHINNTNPIWRAGSERERVEARGFEIGYDGMEVRL.

This sequence belongs to the PqqB family.

Its pathway is cofactor biosynthesis; pyrroloquinoline quinone biosynthesis. In terms of biological role, may be involved in the transport of PQQ or its precursor to the periplasm. The protein is Coenzyme PQQ synthesis protein B of Rhizobium meliloti (strain 1021) (Ensifer meliloti).